The following is a 447-amino-acid chain: Exodeoxyribonuclease 7 large subunit (447 aa).

This sequence belongs to the XseA family. In terms of assembly, heterooligomer composed of large and small subunits.

It is found in the cytoplasm. The catalysed reaction is Exonucleolytic cleavage in either 5'- to 3'- or 3'- to 5'-direction to yield nucleoside 5'-phosphates.. In terms of biological role, bidirectionally degrades single-stranded DNA into large acid-insoluble oligonucleotides, which are then degraded further into small acid-soluble oligonucleotides. The protein is Exodeoxyribonuclease 7 large subunit of Thioalkalivibrio sulfidiphilus (strain HL-EbGR7).